The chain runs to 439 residues: Transcriptional enhancer factor TEF-5 (439 aa).

Over residues 1–12 the composition is skewed to polar residues; the sequence is MASNSWTANSSP. The disordered stretch occupies residues 1 to 34; sequence MASNSWTANSSPGEAREDGSEGLDKGLDNDAEGV. Residue Ala2 is modified to N-acetylalanine. Residues 14 to 28 are compositionally biased toward basic and acidic residues; sequence EAREDGSEGLDKGLD. Positions 28 to 104 form a DNA-binding region, TEA; the sequence is DNDAEGVWSP…QVLARKKVRE (77 aa). Ser148 carries the post-translational modification Phosphoserine. The tract at residues 173-439 is transcriptional activation; that stretch reads GPSQDIKPFA…QHHVYKLVKD (267 aa).

As to quaternary structure, interacts with YAP1 and WWTR1/TAZ. In terms of tissue distribution, expressed in embryos as well as in many adult tissues.

The protein localises to the nucleus. Its function is as follows. Transcription factor which plays a key role in the Hippo signaling pathway, a pathway involved in organ size control and tumor suppression by restricting proliferation and promoting apoptosis. The core of this pathway is composed of a kinase cascade wherein MST1/MST2, in complex with its regulatory protein SAV1, phosphorylates and activates LATS1/2 in complex with its regulatory protein MOB1, which in turn phosphorylates and inactivates YAP1 oncoprotein and WWTR1/TAZ. Acts by mediating gene expression of YAP1 and WWTR1/TAZ, thereby regulating cell proliferation, migration and epithelial mesenchymal transition (EMT) induction. The sequence is that of Transcriptional enhancer factor TEF-5 (Tead3) from Mus musculus (Mouse).